Consider the following 351-residue polypeptide: Alanine racemase (351 aa).

The active-site Proton acceptor; specific for D-alanine is Lys35. Lys35 is subject to N6-(pyridoxal phosphate)lysine. Residue Arg127 coordinates substrate. The Proton acceptor; specific for L-alanine role is filled by Tyr247. Residue Met295 coordinates substrate.

It belongs to the alanine racemase family. Requires pyridoxal 5'-phosphate as cofactor.

The enzyme catalyses L-alanine = D-alanine. It participates in amino-acid biosynthesis; D-alanine biosynthesis; D-alanine from L-alanine: step 1/1. Functionally, catalyzes the interconversion of L-alanine and D-alanine. May also act on other amino acids. In Vesicomyosocius okutanii subsp. Calyptogena okutanii (strain HA), this protein is Alanine racemase (alr).